A 299-amino-acid polypeptide reads, in one-letter code: Cytidine deaminase (299 aa).

2 consecutive CMP/dCMP-type deaminase domains span residues 56–176 and 194–299; these read SKIE…FGPK and LQGD…YIAV. Position 97–99 (97–99) interacts with substrate; sequence NQE. Zn(2+) is bound at residue His-110. Residue Glu-112 is the Proton donor of the active site. Zn(2+) is bound by residues Cys-137 and Cys-140.

This sequence belongs to the cytidine and deoxycytidylate deaminase family. Homodimer. Zn(2+) serves as cofactor.

The enzyme catalyses cytidine + H2O + H(+) = uridine + NH4(+). The catalysed reaction is 2'-deoxycytidine + H2O + H(+) = 2'-deoxyuridine + NH4(+). Functionally, this enzyme scavenges exogenous and endogenous cytidine and 2'-deoxycytidine for UMP synthesis. The chain is Cytidine deaminase from Haemophilus ducreyi (strain 35000HP / ATCC 700724).